The chain runs to 264 residues: Diphthine synthase (264 aa).

S-adenosyl-L-methionine is bound by residues leucine 10, aspartate 87, valine 90, 115–116 (SI), leucine 166, alanine 209, and histidine 234.

The protein belongs to the diphthine synthase family. In terms of assembly, homodimer.

The enzyme catalyses 2-[(3S)-amino-3-carboxypropyl]-L-histidyl-[translation elongation factor 2] + 3 S-adenosyl-L-methionine = diphthine-[translation elongation factor 2] + 3 S-adenosyl-L-homocysteine + 3 H(+). It functions in the pathway protein modification; peptidyl-diphthamide biosynthesis. In terms of biological role, S-adenosyl-L-methionine-dependent methyltransferase that catalyzes the trimethylation of the amino group of the modified target histidine residue in translation elongation factor 2 (EF-2), to form an intermediate called diphthine. The three successive methylation reactions represent the second step of diphthamide biosynthesis. The polypeptide is Diphthine synthase (Thermococcus gammatolerans (strain DSM 15229 / JCM 11827 / EJ3)).